Consider the following 413-residue polypeptide: Hemolin (413 aa).

An N-terminal signal peptide occupies residues 1–18; the sequence is MVSKSIVALAACVAMCVA. Ig-like C2-type domains lie at 25 to 112, 121 to 215, 233 to 322, and 327 to 411; these read PVLK…HIIS, PTTF…LVGY, PMYV…VKLT, and PRFT…TLVI. 4 disulfide bridges follow: Cys-46-Cys-97, Cys-141-Cys-199, Cys-252-Cys-305, and Cys-349-Cys-395. The N-linked (GlcNAc...) asparagine glycan is linked to Asn-283.

The protein belongs to the hemolin family. As to expression, hemolymph.

It localises to the secreted. Functionally, insect-immune protein with antimicrobial activity. Forms a protein complex at the bacterial surface. Can inhibit hemocyte aggregation. The sequence is that of Hemolin from Manduca sexta (Tobacco hawkmoth).